Here is a 178-residue protein sequence, read N- to C-terminus: Large ribosomal subunit protein uL6 (178 aa).

Belongs to the universal ribosomal protein uL6 family. In terms of assembly, part of the 50S ribosomal subunit.

In terms of biological role, this protein binds to the 23S rRNA, and is important in its secondary structure. It is located near the subunit interface in the base of the L7/L12 stalk, and near the tRNA binding site of the peptidyltransferase center. The sequence is that of Large ribosomal subunit protein uL6 from Halobacterium salinarum (strain ATCC 700922 / JCM 11081 / NRC-1) (Halobacterium halobium).